The following is a 282-amino-acid chain: DegV domain-containing protein spr1415 (282 aa).

Residues 3–280 (LAVFTDSSAY…AGSIALGYIP (278 aa)) enclose the DegV domain. Residues T61 and S94 each coordinate hexadecanoate.

May bind long-chain fatty acids, such as palmitate, and may play a role in lipid transport or fatty acid metabolism. The polypeptide is DegV domain-containing protein spr1415 (Streptococcus pneumoniae (strain ATCC BAA-255 / R6)).